Consider the following 326-residue polypeptide: Pyruvate dehydrogenase E1 component subunit alpha (326 aa).

In terms of assembly, heterodimer of an alpha and a beta chain. Requires thiamine diphosphate as cofactor.

The catalysed reaction is N(6)-[(R)-lipoyl]-L-lysyl-[protein] + pyruvate + H(+) = N(6)-[(R)-S(8)-acetyldihydrolipoyl]-L-lysyl-[protein] + CO2. In terms of biological role, the pyruvate dehydrogenase complex catalyzes the overall conversion of pyruvate to acetyl-CoA and CO(2). It contains multiple copies of three enzymatic components: pyruvate dehydrogenase (E1), dihydrolipoamide acetyltransferase (E2) and lipoamide dehydrogenase (E3). This chain is Pyruvate dehydrogenase E1 component subunit alpha (pdhA), found in Rickettsia prowazekii (strain Madrid E).